We begin with the raw amino-acid sequence, 219 residues long: Non-specific lipid transfer protein GPI-anchored 25 (219 aa).

The first 22 residues, 1 to 22 (MATKITGVFILILTITFSSSSA), serve as a signal peptide directing secretion. 4 cysteine pairs are disulfide-bonded: Cys39/Cys85, Cys49/Cys68, Cys69/Cys110, and Cys83/Cys123. A glycan (N-linked (GlcNAc...) asparagine) is linked at Asn59. A glycan (N-linked (GlcNAc...) asparagine) is linked at Asn148. Residues 152-181 (SPQSVDLAPEVSPSSDLFSPETATLAPPPP) are disordered. A lipid anchor (GPI-anchor amidated serine) is attached at Ser192. Positions 193-219 (SDSLKIRNFWFPSTIIMTFATSILARI) are cleaved as a propeptide — removed in mature form.

This sequence belongs to the plant LTP family.

It localises to the cell membrane. In terms of biological role, probable lipid transfer protein. The polypeptide is Non-specific lipid transfer protein GPI-anchored 25 (Arabidopsis thaliana (Mouse-ear cress)).